The chain runs to 348 residues: Fructose-1,6-bisphosphatase class 1 (348 aa).

Residues Glu-92, Asp-111, Leu-113, and Asp-114 each contribute to the Mg(2+) site. Substrate is bound by residues 114–117 and Asn-204; that span reads DGSS. Glu-276 provides a ligand contact to Mg(2+).

Belongs to the FBPase class 1 family. As to quaternary structure, homotetramer. Requires Mg(2+) as cofactor.

It is found in the cytoplasm. It carries out the reaction beta-D-fructose 1,6-bisphosphate + H2O = beta-D-fructose 6-phosphate + phosphate. Its pathway is carbohydrate biosynthesis; gluconeogenesis. The protein is Fructose-1,6-bisphosphatase class 1 of Methylorubrum extorquens (strain CM4 / NCIMB 13688) (Methylobacterium extorquens).